The chain runs to 317 residues: MPVQGSQRRLLGSLNSTPTATPHLGLAANQTGARCLEVSIPDGLFLSLGLVSLVENVLVVTAIAKNRNLHSPMYCFICCLALSDLLVSGSNMLETAVILLLEAGALAARAAVVQQLDNVIDVITCSSMLSSLCFLGAIAVDRYISIFYALRYHSIVTLPRARRAVAAIWVASVLFSMLFIAYYDHAAVLLCLVVFFLAMLVLMAVLYVHMLARACQHAQGIARLHKRQCPAHQGFGLKGAATLTILLGIFFLCWGPFFLHLTLIVLCPQHPTCSCIFKNFNLFLALIICNAIIDPLIYAFRSQELRRTLKEVLLCSW.

The Extracellular segment spans residues 1–37; the sequence is MPVQGSQRRLLGSLNSTPTATPHLGLAANQTGARCLE. The N-linked (GlcNAc...) asparagine glycan is linked to N29. The helical transmembrane segment at 38-63 threads the bilayer; it reads VSIPDGLFLSLGLVSLVENVLVVTAI. Residues 64-72 are Cytoplasmic-facing; the sequence is AKNRNLHSP. The helical transmembrane segment at 73–93 threads the bilayer; the sequence is MYCFICCLALSDLLVSGSNML. Residues 94–118 are Extracellular-facing; sequence ETAVILLLEAGALAARAAVVQQLDN. Residues 119 to 140 form a helical membrane-spanning segment; the sequence is VIDVITCSSMLSSLCFLGAIAV. Residues 141-163 are Cytoplasmic-facing; that stretch reads DRYISIFYALRYHSIVTLPRARR. Residues 164–183 traverse the membrane as a helical segment; the sequence is AVAAIWVASVLFSMLFIAYY. At 184–191 the chain is on the extracellular side; that stretch reads DHAAVLLC. The helical transmembrane segment at 192–211 threads the bilayer; the sequence is LVVFFLAMLVLMAVLYVHML. Residues 212–240 lie on the Cytoplasmic side of the membrane; the sequence is ARACQHAQGIARLHKRQCPAHQGFGLKGA. A helical membrane pass occupies residues 241 to 266; the sequence is ATLTILLGIFFLCWGPFFLHLTLIVL. The Extracellular portion of the chain corresponds to 267–279; it reads CPQHPTCSCIFKN. Residues 280-300 traverse the membrane as a helical segment; sequence FNLFLALIICNAIIDPLIYAF. The Cytoplasmic segment spans residues 301 to 317; sequence RSQELRRTLKEVLLCSW. C315 carries S-palmitoyl cysteine lipidation.

Belongs to the G-protein coupled receptor 1 family. In terms of assembly, interacts with MGRN1, but does not undergo MGRN1-mediated ubiquitination; this interaction competes with GNAS-binding and thus inhibits agonist-induced cAMP production. Interacts with OPN3; the interaction results in a decrease in MC1R-mediated cAMP signaling and ultimately a decrease in melanin production in melanocytes.

It localises to the cell membrane. In terms of biological role, receptor for MSH (alpha, beta and gamma) and ACTH. The activity of this receptor is mediated by G proteins which activate adenylate cyclase. Mediates melanogenesis, the production of eumelanin (black/brown) and phaeomelanin (red/yellow), via regulation of cAMP signaling in melanocytes. The sequence is that of Melanocyte-stimulating hormone receptor (MC1R) from Chlorocebus aethiops (Green monkey).